Reading from the N-terminus, the 98-residue chain is Feather keratin (98 aa).

Ala-1 is modified (N-acetylalanine).

The protein belongs to the avian keratin family. The avian keratins (F-ker, S-ker, C-ker and B-ker) are a complex mixture of very similar polypeptides.

This Chroicocephalus novaehollandiae (Silver gull) protein is Feather keratin.